The chain runs to 49 residues: uncharacterized protein (49 aa).

Residues 31–48 traverse the membrane as a helical segment; it reads PDLYTIIVSYFSIFSLFF.

It is found in the membrane. This is an uncharacterized protein from Saccharomyces cerevisiae (strain ATCC 204508 / S288c) (Baker's yeast).